Consider the following 276-residue polypeptide: Type III pantothenate kinase (276 aa).

Position 18–25 (18–25 (EIGNSRLH)) interacts with ATP. Substrate-binding positions include Tyr-116 and 120-123 (GIDR). Asp-122 acts as the Proton acceptor in catalysis. Residue Asp-142 participates in K(+) binding. Thr-145 contacts ATP. A substrate-binding site is contributed by Thr-200.

It belongs to the type III pantothenate kinase family. As to quaternary structure, homodimer. It depends on NH4(+) as a cofactor. The cofactor is K(+).

It localises to the cytoplasm. The enzyme catalyses (R)-pantothenate + ATP = (R)-4'-phosphopantothenate + ADP + H(+). It participates in cofactor biosynthesis; coenzyme A biosynthesis; CoA from (R)-pantothenate: step 1/5. Catalyzes the phosphorylation of pantothenate (Pan), the first step in CoA biosynthesis. The protein is Type III pantothenate kinase of Nostoc sp. (strain PCC 7120 / SAG 25.82 / UTEX 2576).